A 1212-amino-acid polypeptide reads, in one-letter code: Filamin-A-interacting protein 1 (1212 aa).

Over residues 1 to 15 (MRSRNQGGESSSNGH) the composition is skewed to polar residues. Positions 1-73 (MRSRNQGGES…SEKKTKKSVE (73 aa)) are disordered. Basic and acidic residues-rich tracts occupy residues 32 to 47 (PSED…KEED) and 60 to 73 (PSGE…KSVE). Serine 137 is modified (phosphoserine). 2 coiled-coil regions span residues 191–575 (DYMN…DELM) and 623–777 (PEDN…ELEL). Disordered stretches follow at residues 871–898 (WMRK…HPGE) and 948–975 (KPRI…GPER). Serine 978 is modified (phosphoserine). The tract at residues 1102-1190 (VSTGTVLRSP…TKFQPRAETQ (89 aa)) is disordered. Residues 1124–1138 (VTSTITITPVTTSST) show a composition bias toward low complexity. A compositionally biased stretch (polar residues) spans 1139 to 1155 (RGTQSVSGQDGSSQRPT).

Belongs to the FILIP1 family. In terms of assembly, interacts with FLNA. Interacts with RHOD (in GTP-bound form). In terms of tissue distribution, expressed in muscle tissue, including heart. Found in cortical ventricular zone.

The protein resides in the cytoplasm. Its subcellular location is the cytoskeleton. It is found in the stress fiber. Functionally, by acting through a filamin-A/F-actin axis, it controls the start of neocortical cell migration from the ventricular zone. May be able to induce the degradation of Filamin A. The polypeptide is Filamin-A-interacting protein 1 (Filip1) (Rattus norvegicus (Rat)).